The chain runs to 51 residues: MARNKPLGKKLRLAAALKSNRNPPVWVVVKTKRRVTRSPTRRHWRRTKLKA.

It belongs to the eukaryotic ribosomal protein eL39 family.

The sequence is that of Large ribosomal subunit protein eL39 from Pyrobaculum islandicum (strain DSM 4184 / JCM 9189 / GEO3).